Consider the following 668-residue polypeptide: Threonine--tRNA ligase (668 aa).

The TGS domain occupies 1–61 (MSDLKIALTH…ADGDQVEPVA (61 aa)). Residues 265-564 (DHRKLGRDLD…LVEHYAGAFP (300 aa)) are catalytic. The Zn(2+) site is built by cysteine 358, histidine 409, and histidine 541.

It belongs to the class-II aminoacyl-tRNA synthetase family. Homodimer. The cofactor is Zn(2+).

Its subcellular location is the cytoplasm. It carries out the reaction tRNA(Thr) + L-threonine + ATP = L-threonyl-tRNA(Thr) + AMP + diphosphate + H(+). Functionally, catalyzes the attachment of threonine to tRNA(Thr) in a two-step reaction: L-threonine is first activated by ATP to form Thr-AMP and then transferred to the acceptor end of tRNA(Thr). Also edits incorrectly charged L-seryl-tRNA(Thr). The chain is Threonine--tRNA ligase from Nocardioides sp. (strain ATCC BAA-499 / JS614).